A 143-amino-acid chain; its full sequence is Transcriptional regulator MraZ (143 aa).

SpoVT-AbrB domains are found at residues 5 to 47 (EYSH…PMAV) and 76 to 119 (ALEA…SAEN).

This sequence belongs to the MraZ family. In terms of assembly, forms oligomers.

Its subcellular location is the cytoplasm. The protein localises to the nucleoid. This Leuconostoc mesenteroides subsp. mesenteroides (strain ATCC 8293 / DSM 20343 / BCRC 11652 / CCM 1803 / JCM 6124 / NCDO 523 / NBRC 100496 / NCIMB 8023 / NCTC 12954 / NRRL B-1118 / 37Y) protein is Transcriptional regulator MraZ.